Reading from the N-terminus, the 206-residue chain is N-(5'-phosphoribosyl)anthranilate isomerase (206 aa).

The protein belongs to the TrpF family.

The enzyme catalyses N-(5-phospho-beta-D-ribosyl)anthranilate = 1-(2-carboxyphenylamino)-1-deoxy-D-ribulose 5-phosphate. It functions in the pathway amino-acid biosynthesis; L-tryptophan biosynthesis; L-tryptophan from chorismate: step 3/5. The polypeptide is N-(5'-phosphoribosyl)anthranilate isomerase (Pseudomonas putida (strain GB-1)).